A 470-amino-acid chain; its full sequence is Probable E3 ubiquitin-protein ligase TRIML1 (470 aa).

The RING-type zinc-finger motif lies at 22-63; the sequence is CFICLDYFSSPVTTECGHSFCLMCLLKSWEEHNTPLSCPECW. Coiled coils occupy residues 135-170 and 196-235; these read SEAE…KERV and KEEE…GKMI. The B30.2/SPRY domain maps to 273 to 470; sequence TELSLCHITG…NTDPLIICHI (198 aa).

As to quaternary structure, interacts with USP5. As to expression, testis.

The enzyme catalyses S-ubiquitinyl-[E2 ubiquitin-conjugating enzyme]-L-cysteine + [acceptor protein]-L-lysine = [E2 ubiquitin-conjugating enzyme]-L-cysteine + N(6)-ubiquitinyl-[acceptor protein]-L-lysine.. Its pathway is protein modification; protein ubiquitination. Its function is as follows. Probable E3 ubiquitin-protein ligase which plays an important role in blastocyst development. Involved in progression of blastocyst stage and subsequent embryo development. In Mus musculus (Mouse), this protein is Probable E3 ubiquitin-protein ligase TRIML1 (Triml1).